The following is a 313-amino-acid chain: Olfactory receptor 51A2 (313 aa).

Topologically, residues 1 to 27 (MSIINTSYVEITTFFLVGMPGLEYAHI) are extracellular. The N-linked (GlcNAc...) asparagine glycan is linked to Asn-5. Residues 28 to 48 (WISIPICSMYLIAILGNGTIL) form a helical membrane-spanning segment. Over 49–56 (FIIKTEPS) the chain is Cytoplasmic. A helical membrane pass occupies residues 57-77 (LHGPMYYFLSMLAMSDLGLSL). At 78-101 (SSLPTVLSIFLFNAPETSSSACFA) the chain is on the extracellular side. Cysteines 99 and 191 form a disulfide. Residues 102–122 (QEFFIHGFSVLESSVLLIMSF) form a helical membrane-spanning segment. Topologically, residues 123-141 (DRFLAIHNPLRYTSILTTV) are cytoplasmic. The helical transmembrane segment at 142-162 (RVAQIGIVFSFKSMLLVLPFP) threads the bilayer. Residues 163–198 (FTLRSLRYCKKNQLSHSYCLHQDVMKLACSDNRIDV) are Extracellular-facing. A helical transmembrane segment spans residues 199-218 (IYGFFGALCLMVDFILIAVS). The Cytoplasmic portion of the chain corresponds to 219-238 (YTLILKTVPGIASKKEELKA). The helical transmembrane segment at 239-259 (LNTCVSHICAVIIFYLPIINL) threads the bilayer. Topologically, residues 260-274 (AVVHRFAGHVSPLIN) are extracellular. A helical transmembrane segment spans residues 275–295 (VLMANVLLLVPPLMKPIVYCV). The Cytoplasmic segment spans residues 296 to 313 (KTKQIRVRVVAKLCQWKI).

The protein belongs to the G-protein coupled receptor 1 family.

It localises to the cell membrane. Odorant receptor. This Homo sapiens (Human) protein is Olfactory receptor 51A2 (OR51A2).